The chain runs to 325 residues: Protein ORANGE-GREEN, chloroplastic (325 aa).

The N-terminal 54 residues, Met-1–Ser-54, are a transit peptide targeting the chloroplast. Low complexity predominate over residues Ala-53–Ser-71. Residues Ala-53–Thr-77 form a disordered region. 2 helical membrane-spanning segments follow: residues Leu-164–Ala-184 and Ile-217–Val-237. A CR-type-like region spans residues Val-226–His-317. The stretch at Cys-248–Gly-255 is one CXXCXGXG motif repeat. One copy of the CXXCXXXG motif repeat lies at Cys-259 to Gly-266. Residues Cys-292–Gly-299 form a CXXCXGXG motif repeat. The stretch at Cys-303–Gly-310 is one CXXCXXXG motif repeat.

Belongs to the orange-like family.

Its subcellular location is the plastid. It localises to the chloroplast membrane. Functionally, involved in chloroplast differentiation in fruit flesh. The protein is Protein ORANGE-GREEN, chloroplastic of Cucumis melo (Muskmelon).